A 398-amino-acid polypeptide reads, in one-letter code: 1-deoxy-D-xylulose 5-phosphate reductoisomerase (398 aa).

NADPH is bound by residues T10, G11, S12, I13, G36, N38, and N124. K125 is a binding site for 1-deoxy-D-xylulose 5-phosphate. E126 contributes to the NADPH binding site. Residue D150 coordinates Mn(2+). S151, E152, S186, and H209 together coordinate 1-deoxy-D-xylulose 5-phosphate. Position 152 (E152) interacts with Mn(2+). G215 is an NADPH binding site. Residues S222, N227, K228, and E231 each coordinate 1-deoxy-D-xylulose 5-phosphate. Residue E231 coordinates Mn(2+).

It belongs to the DXR family. As to quaternary structure, homodimer. The cofactor is Mg(2+). Requires Mn(2+) as cofactor.

It carries out the reaction 2-C-methyl-D-erythritol 4-phosphate + NADP(+) = 1-deoxy-D-xylulose 5-phosphate + NADPH + H(+). Its pathway is isoprenoid biosynthesis; isopentenyl diphosphate biosynthesis via DXP pathway; isopentenyl diphosphate from 1-deoxy-D-xylulose 5-phosphate: step 1/6. Functionally, catalyzes the NADPH-dependent rearrangement and reduction of 1-deoxy-D-xylulose-5-phosphate (DXP) to 2-C-methyl-D-erythritol 4-phosphate (MEP). In Pectobacterium atrosepticum (strain SCRI 1043 / ATCC BAA-672) (Erwinia carotovora subsp. atroseptica), this protein is 1-deoxy-D-xylulose 5-phosphate reductoisomerase.